Consider the following 345-residue polypeptide: Anthranilate phosphoribosyltransferase (345 aa).

5-phospho-alpha-D-ribose 1-diphosphate contacts are provided by residues Gly87, 90–91 (GD), Thr95, 97–100 (NAST), 115–123 (KHGNRSFSS), and Ser127. Gly87 is an anthranilate binding site. Residue Ser99 participates in Mg(2+) binding. Asn118 lines the anthranilate pocket. Arg173 is an anthranilate binding site. Mg(2+) contacts are provided by Asp232 and Glu233.

Belongs to the anthranilate phosphoribosyltransferase family. In terms of assembly, homodimer. The cofactor is Mg(2+).

The enzyme catalyses N-(5-phospho-beta-D-ribosyl)anthranilate + diphosphate = 5-phospho-alpha-D-ribose 1-diphosphate + anthranilate. It functions in the pathway amino-acid biosynthesis; L-tryptophan biosynthesis; L-tryptophan from chorismate: step 2/5. Its function is as follows. Catalyzes the transfer of the phosphoribosyl group of 5-phosphorylribose-1-pyrophosphate (PRPP) to anthranilate to yield N-(5'-phosphoribosyl)-anthranilate (PRA). This Aeropyrum pernix (strain ATCC 700893 / DSM 11879 / JCM 9820 / NBRC 100138 / K1) protein is Anthranilate phosphoribosyltransferase.